A 341-amino-acid polypeptide reads, in one-letter code: Biotin synthase (341 aa).

Positions 53-272 (NHVETASLLS…IAVARIMMPK (220 aa)) constitute a Radical SAM core domain. 3 residues coordinate [4Fe-4S] cluster: C68, C72, and C75. C112, C143, C203, and R276 together coordinate [2Fe-2S] cluster.

Belongs to the radical SAM superfamily. Biotin synthase family. In terms of assembly, homodimer. [4Fe-4S] cluster serves as cofactor. Requires [2Fe-2S] cluster as cofactor.

The enzyme catalyses (4R,5S)-dethiobiotin + (sulfur carrier)-SH + 2 reduced [2Fe-2S]-[ferredoxin] + 2 S-adenosyl-L-methionine = (sulfur carrier)-H + biotin + 2 5'-deoxyadenosine + 2 L-methionine + 2 oxidized [2Fe-2S]-[ferredoxin]. The protein operates within cofactor biosynthesis; biotin biosynthesis; biotin from 7,8-diaminononanoate: step 2/2. In terms of biological role, catalyzes the conversion of dethiobiotin (DTB) to biotin by the insertion of a sulfur atom into dethiobiotin via a radical-based mechanism. This chain is Biotin synthase, found in Nitrobacter winogradskyi (strain ATCC 25391 / DSM 10237 / CIP 104748 / NCIMB 11846 / Nb-255).